The following is a 160-amino-acid chain: S-adenosylmethionine decarboxylase proenzyme (160 aa).

S73 (schiff-base intermediate with substrate; via pyruvic acid) is an active-site residue. Position 73 is a pyruvic acid (Ser); by autocatalysis (S73). Residue H78 is the Proton acceptor; for processing activity of the active site. The active-site Proton donor; for catalytic activity is C93.

It belongs to the prokaryotic AdoMetDC family. Type 1 subfamily. In terms of assembly, heterotetramer of two alpha and two beta chains arranged as a dimer of alpha/beta heterodimers. Requires pyruvate as cofactor. Post-translationally, is synthesized initially as an inactive proenzyme. Formation of the active enzyme involves a self-maturation process in which the active site pyruvoyl group is generated from an internal serine residue via an autocatalytic post-translational modification. Two non-identical subunits are generated from the proenzyme in this reaction, and the pyruvate is formed at the N-terminus of the alpha chain, which is derived from the carboxyl end of the proenzyme. The post-translation cleavage follows an unusual pathway, termed non-hydrolytic serinolysis, in which the side chain hydroxyl group of the serine supplies its oxygen atom to form the C-terminus of the beta chain, while the remainder of the serine residue undergoes an oxidative deamination to produce ammonia and the pyruvoyl group blocking the N-terminus of the alpha chain.

It carries out the reaction S-adenosyl-L-methionine + H(+) = S-adenosyl 3-(methylsulfanyl)propylamine + CO2. It functions in the pathway amine and polyamine biosynthesis; S-adenosylmethioninamine biosynthesis; S-adenosylmethioninamine from S-adenosyl-L-methionine: step 1/1. Catalyzes the decarboxylation of S-adenosylmethionine to S-adenosylmethioninamine (dcAdoMet), the propylamine donor required for the synthesis of the polyamines spermine and spermidine from the diamine putrescine. In Pseudomonas paraeruginosa (strain DSM 24068 / PA7) (Pseudomonas aeruginosa (strain PA7)), this protein is S-adenosylmethionine decarboxylase proenzyme.